The sequence spans 70 residues: Probable ferredoxin TA0517 (70 aa).

2 consecutive 4Fe-4S ferredoxin-type domains span residues 8-36 (TEMD…WLDE) and 37-66 (TVIK…AEWF). Residues Cys-17, Cys-20, Cys-23, Cys-27, Cys-46, Cys-49, Cys-52, and Cys-56 each coordinate [4Fe-4S] cluster.

The cofactor is [4Fe-4S] cluster.

Functionally, ferredoxins are iron-sulfur proteins that transfer electrons in a wide variety of metabolic reactions. This chain is Probable ferredoxin TA0517, found in Thermoplasma acidophilum (strain ATCC 25905 / DSM 1728 / JCM 9062 / NBRC 15155 / AMRC-C165).